Here is a 644-residue protein sequence, read N- to C-terminus: MSSDAAAVADRDGSSPGHGGHAHGSLGAMVVGAVGVVFGDIGTSPLYAFRETFAGHHPLPPDELHILGVLSLIFWSMMLVVTFKYVAIIMRADNKGEGGSLALLALINRKSEGKRWGKGIILLGVFATALFYGDSMITPAISVLSAVEGLTTVEAGFAPMVLPIAVGILIALFMIQSRGTAKVGMLFGPIMMIYFTTLGVLGTWHIIGNPHVLIALNPWYAVRFFMEEGTLAFLAMGSVVLAVTGAEALYADMGHFGRRPIGLSWLVFVLPALMLNYLGQGAMILSQDMATALRTIHNPFFLLAPEMLRLPLVILATMATVIASQAVITGAFSVTQQAIQLGFIPRLRITHTSAGSIGQIYIPAINWGLMVMVILLVMSFRTSSNLAAAYGIAVTGAMAIDTCLIAVVLIHLWGWNKALAAPLIAVFAAVDIAYFGANLTKVPDGGWFPLLIGFIAFTLLTTWGRGRMLMINRLREAAMPVKVFVQSAVNSAVRVPGTAVFMTSQAQGVPHALLHNLKHNKVLHERVILLTVKIADAPYVPESHRVDFADLGQGFYRIVINYGFMEDPDVPAVLSRTRTCGPEFKMMDTSFFLARQTLLPSERPAMAIWREKLFAWMLRNAESAMEFFKLPTNRVVELGSQVEI.

The segment at 1 to 21 (MSSDAAAVADRDGSSPGHGGH) is disordered. A run of 12 helical transmembrane segments spans residues 26 to 46 (LGAM…TSPL), 69 to 89 (VLSL…VAII), 120 to 140 (IILL…ITPA), 155 to 175 (AGFA…LFMI), 183 to 203 (VGML…VLGT), 231 to 251 (LAFL…ALYA), 265 to 285 (WLVF…AMIL), 312 to 332 (LVIL…TGAF), 360 to 380 (IYIP…VMSF), 390 to 410 (YGIA…VVLI), 419 to 439 (LAAP…GANL), and 444 to 464 (DGGW…TTWG).

The protein belongs to the HAK/KUP transporter (TC 2.A.72) family.

It localises to the cell inner membrane. The enzyme catalyses K(+)(in) + H(+)(in) = K(+)(out) + H(+)(out). Transport of potassium into the cell. Likely operates as a K(+):H(+) symporter. The polypeptide is Probable potassium transport system protein Kup 2 (Rhizorhabdus wittichii (strain DSM 6014 / CCUG 31198 / JCM 15750 / NBRC 105917 / EY 4224 / RW1) (Sphingomonas wittichii)).